A 535-amino-acid polypeptide reads, in one-letter code: Alpha-1,3-mannosyl-glycoprotein 4-beta-N-acetylglucosaminyltransferase A (535 aa).

At 1 to 4 the chain is on the cytoplasmic side; it reads MRLR. Residues 5-27 traverse the membrane as a helical; Signal-anchor for type II membrane protein segment; sequence NGTVATALAFITSFLTLSWYTTW. Residues 28–63 adopt a coiled-coil conformation; sequence QNGKEKLIAYQREFLALKERLRIAEHRISQRSSELN. Residues 28 to 535 are Lumenal-facing; the sequence is QNGKEKLIAY…NEIHIKKATN (508 aa). 2 N-linked (GlcNAc...) asparagine glycosylation sites follow: asparagine 77 and asparagine 458. At serine 474 the chain carries Phosphoserine.

This sequence belongs to the glycosyltransferase 54 family. Requires a divalent metal cation as cofactor. Post-translationally, N-glycosylated.

The protein resides in the golgi apparatus membrane. It localises to the secreted. It carries out the reaction N(4)-{beta-D-GlcNAc-(1-&gt;2)-alpha-D-Man-(1-&gt;3)-[beta-D-GlcNAc-(1-&gt;2)-alpha-D-Man-(1-&gt;6)]-beta-D-Man-(1-&gt;4)-beta-D-GlcNAc-(1-&gt;4)-beta-D-GlcNAc}-L-asparaginyl-[protein] + UDP-N-acetyl-alpha-D-glucosamine = N(4)-{beta-D-GlcNAc-(1-&gt;2)-[beta-D-GlcNAc-(1-&gt;4)]-alpha-D-Man-(1-&gt;3)-[beta-D-GlcNAc-(1-&gt;2)-alpha-D-Man-(1-&gt;6)]-beta-D-Man-(1-&gt;4)-beta-D-GlcNAc-(1-&gt;4)-beta-D-GlcNAc}-L-asparaginyl-[protein] + UDP + H(+). The catalysed reaction is an N(4)-{beta-D-GlcNAc-(1-&gt;2)-alpha-D-Man-(1-&gt;3)-[alpha-D-Man-(1-&gt;6)]-beta-D-Man-(1-&gt;4)-beta-D-GlcNAc-(1-&gt;4)-beta-D-GlcNAc}-L-asparaginyl-[protein] + UDP-N-acetyl-alpha-D-glucosamine = an N(4)-{beta-D-GlcNAc-(1-&gt;2)-[beta-D-GlcNAc-(1-&gt;4)]-alpha-D-Man-(1-&gt;3)-[alpha-D-Man-(1-&gt;6)]-beta-D-Man-(1-&gt;4)-beta-D-GlcNAc-(1-&gt;4)-beta-D-GlcNAc}-L-asparaginyl-[protein] + UDP + H(+). It catalyses the reaction an N(4)-{beta-D-GlcNAc-(1-&gt;2)-alpha-D-Man-(1-&gt;3)-[beta-D-GlcNAc-(1-&gt;2)-[beta-D-GlcNAc-(1-&gt;6)]-alpha-D-Man-(1-&gt;6)]-beta-D-Man-(1-&gt;4)-beta-D-GlcNAc-(1-&gt;4)-beta-D-GlcNAc}-L-asparaginyl-[protein] + UDP-N-acetyl-alpha-D-glucosamine = an N(4)-{beta-D-GlcNAc-(1-&gt;2)-[beta-D-GlcNAc-(1-&gt;4)]-alpha-D-Man-(1-&gt;3)-[beta-D-GlcNAc-(1-&gt;2)-[beta-D-GlcNAc-(1-&gt;6)]-alpha-D-Man-(1-&gt;6)]-beta-D-Man-(1-&gt;4)-beta-D-GlcNAc-(1-&gt;4)-beta-D-GlcNAc}-L-asparaginyl-[protein] + UDP + H(+). The enzyme catalyses an N(4)-{beta-D-GlcNAc-(1-&gt;2)-alpha-D-Man-(1-&gt;3)-[beta-D-GlcNAc-(1-&gt;2)-alpha-D-Man-(1-&gt;6)]-beta-D-Man-(1-&gt;4)-beta-D-GlcNAc-(1-&gt;4)-[alpha-L-Fuc-(1-&gt;6)]-beta-D-GlcNAc}-L-asparaginyl-[protein] + UDP-N-acetyl-alpha-D-glucosamine = N(4)-{beta-D-GlcNAc-(1-&gt;2)-[beta-D-GlcNAc-(1-&gt;4)]-alpha-D-Man-(1-&gt;3)-[beta-D-GlcNAc-(1-&gt;2)-alpha-D-Man-(1-&gt;6)]-beta-D-Man-(1-&gt;4)-beta-D-GlcNAc-(1-&gt;4)-[alpha-L-Fuc-(1-&gt;6)]-beta-D-GlcNAc}-asparaginyl-[protein] + UDP + H(+). It carries out the reaction an N(4)-{beta-D-GlcNAc-(1-&gt;2)-alpha-D-Man-(1-&gt;3)-[beta-D-Gal-(1-&gt;4)-beta-D-GlcNAc-(1-&gt;2)-alpha-D-Man-(1-&gt;6)]-beta-D-Man-(1-&gt;4)-beta-D-GlcNAc-(1-&gt;4)-beta-D-GlcNAc}-L-asparaginyl-[protein] + UDP-N-acetyl-alpha-D-glucosamine = an N(4)-{beta-D-GlcNAc-(1-&gt;2)-[beta-D-GlcNAc-(1-&gt;4)]-alpha-D-Man-(1-&gt;3)-[beta-D-Gal-(1-&gt;4)-beta-D-GlcNAc-(1-&gt;2)-alpha-D-Man-(1-&gt;6)]-beta-D-Man-(1-&gt;4)-beta-D-GlcNAc-(1-&gt;4)-beta-D-GlcNAc}-L-asparaginyl-[protein] + UDP + H(+). The catalysed reaction is N(4)-{beta-D-GlcNAc-(1-&gt;2)-alpha-D-Man-(1-&gt;3)-[alpha-D-Man-(1-&gt;3)-{alpha-D-Man-(1-&gt;6)}-alpha-D-Man-(1-&gt;6)]-beta-D-Man-(1-&gt;4)-beta-D-GlcNAc-(1-&gt;4)-beta-D-GlcNAc}-asparaginyl-[protein] + UDP-N-acetyl-alpha-D-glucosamine = N(4)-{beta-D-GlcNAc-(1-&gt;2)-[beta-D-GlcNAc-(1-&gt;4)]-alpha-D-Man-(1-&gt;3)-[alpha-D-Man-(1-&gt;3)-{alpha-D-Man-(1-&gt;6)}-alpha-D-Man-(1-&gt;6)]-beta-D-Man-(1-&gt;4)-beta-D-GlcNAc-(1-&gt;4)-beta-D-GlcNAc}-asparaginyl-[protein] + UDP + H(+). It catalyses the reaction N(4)-{beta-D-GlcNAc-(1-&gt;2)-alpha-D-Man-(1-&gt;3)-beta-D-Man-(1-&gt;4)-beta-D-GlcNAc-(1-&gt;4)-beta-D-GlcNAc}-asparaginyl-[protein] + UDP-N-acetyl-alpha-D-glucosamine = N(4)-{beta-D-GlcNAc-(1-&gt;2)-[beta-D-GlcNAc-(1-&gt;4)]-alpha-D-Man-(1-&gt;3)-beta-D-Man-(1-&gt;4)-beta-D-GlcNAc-(1-&gt;4)-beta-D-GlcNAc}-asparaginyl-[protein] + UDP + H(+). The protein operates within protein modification; protein glycosylation. Inhibited by UDP. Functionally, glycosyltransferase that catalyze the transfer of GlcNAc from UDP-GlcNAc to the GlcNAcbeta1-2Manalpha1-3 arm of the core structure of N-linked glycans through a beta1-4 linkage and participates in the production of tri- and tetra-antennary N-linked sugar chains. Involved in glucose transport by mediating SLC2A2/GLUT2 glycosylation, thereby controlling cell-surface expression of SLC2A2 in pancreatic beta cells. This is Alpha-1,3-mannosyl-glycoprotein 4-beta-N-acetylglucosaminyltransferase A from Pongo abelii (Sumatran orangutan).